The chain runs to 259 residues: Phosphate import ATP-binding protein PstB (259 aa).

Residues 13–254 (LEVNNLNFHY…PRLQRTEDYI (242 aa)) enclose the ABC transporter domain. An ATP-binding site is contributed by 45–52 (GPSGCGKS).

The protein belongs to the ABC transporter superfamily. Phosphate importer (TC 3.A.1.7) family. In terms of assembly, the complex is composed of two ATP-binding proteins (PstB), two transmembrane proteins (PstC and PstA) and a solute-binding protein (PstS).

The protein localises to the cell inner membrane. The catalysed reaction is phosphate(out) + ATP + H2O = ADP + 2 phosphate(in) + H(+). Its function is as follows. Part of the ABC transporter complex PstSACB involved in phosphate import. Responsible for energy coupling to the transport system. The protein is Phosphate import ATP-binding protein PstB of Pasteurella multocida (strain Pm70).